A 333-amino-acid chain; its full sequence is T-cell surface glycoprotein CD1b1 (333 aa).

Positions 1 to 17 (MLLVALALLAFLFPAGD) are cleaved as a signal peptide. At 18–302 (TQNALQWPTS…LYWGHSISIG (285 aa)) the chain is on the extracellular side. 3 N-linked (GlcNAc...) asparagine glycosylation sites follow: asparagine 38, asparagine 75, and asparagine 146. 3 disulfide bridges follow: cysteine 120–cysteine 184, cysteine 149–cysteine 163, and cysteine 224–cysteine 279. The Ig-like domain occupies 197–295 (PDIQKQVKPD…LEGQDIILYW (99 aa)). Residues 303–323 (WIILAVLVPCLIVLVLFVLWF) traverse the membrane as a helical segment. Residues 324–333 (YRRWSYEDIL) are Cytoplasmic-facing. The short motif at 329 to 332 (YEDI) is the Internalization signal element.

Heterodimer with B2M (beta-2-microglobulin). Interacts with saposin C.

The protein localises to the cell membrane. It is found in the endosome membrane. It localises to the lysosome membrane. Antigen-presenting protein that binds self and non-self lipid and glycolipid antigens and presents them to T-cell receptors on natural killer T-cells. The protein is T-cell surface glycoprotein CD1b1 (CD1B1) of Cavia porcellus (Guinea pig).